Here is a 315-residue protein sequence, read N- to C-terminus: Ornithine carbamoyltransferase, anabolic (315 aa).

Residues 57-60 (STRT), glutamine 84, arginine 108, and 135-138 (HPCQ) each bind carbamoyl phosphate. L-ornithine contacts are provided by residues asparagine 166, aspartate 230, and 234–235 (SM). Residues 270–271 (CL) and arginine 298 each bind carbamoyl phosphate.

Belongs to the aspartate/ornithine carbamoyltransferase superfamily. OTCase family. Homododecamer (tetramer of trimers).

Its subcellular location is the cytoplasm. It carries out the reaction carbamoyl phosphate + L-ornithine = L-citrulline + phosphate + H(+). Its pathway is amino-acid biosynthesis; L-arginine biosynthesis; L-arginine from L-ornithine and carbamoyl phosphate: step 1/3. Its activity is regulated as follows. Inhibited by the bisubstrate delta-N-phosphonoacetyl-L-ornithine (PALO). Reversibly catalyzes the transfer of the carbamoyl group from carbamoyl phosphate (CP) to the N(epsilon) atom of ornithine (ORN) to produce L-citrulline, which is a substrate for argininosuccinate synthetase, the enzyme involved in the final step in arginine biosynthesis. The chain is Ornithine carbamoyltransferase, anabolic from Pyrococcus furiosus (strain ATCC 43587 / DSM 3638 / JCM 8422 / Vc1).